The primary structure comprises 476 residues: Aspartyl/glutamyl-tRNA(Asn/Gln) amidotransferase subunit B (476 aa).

Belongs to the GatB/GatE family. GatB subfamily. In terms of assembly, heterotrimer of A, B and C subunits.

It carries out the reaction L-glutamyl-tRNA(Gln) + L-glutamine + ATP + H2O = L-glutaminyl-tRNA(Gln) + L-glutamate + ADP + phosphate + H(+). The enzyme catalyses L-aspartyl-tRNA(Asn) + L-glutamine + ATP + H2O = L-asparaginyl-tRNA(Asn) + L-glutamate + ADP + phosphate + 2 H(+). In terms of biological role, allows the formation of correctly charged Asn-tRNA(Asn) or Gln-tRNA(Gln) through the transamidation of misacylated Asp-tRNA(Asn) or Glu-tRNA(Gln) in organisms which lack either or both of asparaginyl-tRNA or glutaminyl-tRNA synthetases. The reaction takes place in the presence of glutamine and ATP through an activated phospho-Asp-tRNA(Asn) or phospho-Glu-tRNA(Gln). The protein is Aspartyl/glutamyl-tRNA(Asn/Gln) amidotransferase subunit B of Clostridium botulinum (strain ATCC 19397 / Type A).